Here is a 1202-residue protein sequence, read N- to C-terminus: Ribonuclease P protein component, mitochondrial (1202 aa).

Residues 1-122 (MAFKSFIYSK…NNNNNQHRYY (122 aa)) constitute a mitochondrion transit peptide. A disordered region spans residues 109 to 134 (NYVNNNNNNQHRYYSTGPTLPTNQYD). Residues 118–134 (QHRYYSTGPTLPTNQYD) are compositionally biased toward polar residues.

Consists of an RNA moiety (RPM1) and the protein component (RPM2). Both are necessary for full enzymatic activity.

The protein localises to the mitochondrion. The enzyme catalyses Endonucleolytic cleavage of RNA, removing 5'-extranucleotides from tRNA precursor.. In terms of biological role, ribonuclease P generates mature tRNA molecules by cleaving their 5'-ends. This chain is Ribonuclease P protein component, mitochondrial (RPM2), found in Saccharomyces cerevisiae (strain ATCC 204508 / S288c) (Baker's yeast).